Here is a 234-residue protein sequence, read N- to C-terminus: Zein-alpha GZ19AB11 (234 aa).

Positions 1–21 (MAAKIFCLLMLLGLSASAATA) are cleaved as a signal peptide.

It belongs to the zein family.

Functionally, zeins are major seed storage proteins. The chain is Zein-alpha GZ19AB11 from Zea mays (Maize).